Reading from the N-terminus, the 176-residue chain is Ribosome maturation factor RimM (176 aa).

Residues 100–173 (EGEFHLLDLV…WLRLTPPPGL (74 aa)) form the PRC barrel domain.

The protein belongs to the RimM family. As to quaternary structure, binds ribosomal protein uS19.

Its subcellular location is the cytoplasm. In terms of biological role, an accessory protein needed during the final step in the assembly of 30S ribosomal subunit, possibly for assembly of the head region. Essential for efficient processing of 16S rRNA. May be needed both before and after RbfA during the maturation of 16S rRNA. It has affinity for free ribosomal 30S subunits but not for 70S ribosomes. The chain is Ribosome maturation factor RimM from Prochlorococcus marinus (strain MIT 9313).